A 163-amino-acid chain; its full sequence is 3-hydroxyacyl-[acyl-carrier-protein] dehydratase FabZ (163 aa).

Residue His-64 is part of the active site.

Belongs to the thioester dehydratase family. FabZ subfamily.

The protein localises to the cytoplasm. It carries out the reaction a (3R)-hydroxyacyl-[ACP] = a (2E)-enoyl-[ACP] + H2O. Its function is as follows. Involved in unsaturated fatty acids biosynthesis. Catalyzes the dehydration of short chain beta-hydroxyacyl-ACPs and long chain saturated and unsaturated beta-hydroxyacyl-ACPs. The chain is 3-hydroxyacyl-[acyl-carrier-protein] dehydratase FabZ from Caulobacter sp. (strain K31).